A 1378-amino-acid chain; its full sequence is DNA-directed RNA polymerase subunit beta (1378 aa).

The protein belongs to the RNA polymerase beta chain family. In terms of assembly, the RNAP catalytic core consists of 2 alpha, 1 beta, 1 beta' and 1 omega subunit. When a sigma factor is associated with the core the holoenzyme is formed, which can initiate transcription.

It catalyses the reaction RNA(n) + a ribonucleoside 5'-triphosphate = RNA(n+1) + diphosphate. In terms of biological role, DNA-dependent RNA polymerase catalyzes the transcription of DNA into RNA using the four ribonucleoside triphosphates as substrates. The chain is DNA-directed RNA polymerase subunit beta from Sorangium cellulosum (strain So ce56) (Polyangium cellulosum (strain So ce56)).